The sequence spans 53 residues: ATP synthase protein 8 (53 aa).

Residues 9 to 29 (WIFFLFFFICIFLIFNIMNYF) form a helical membrane-spanning segment.

The protein belongs to the ATPase protein 8 family. In terms of assembly, F-type ATPases have 2 components, CF(1) - the catalytic core - and CF(0) - the membrane proton channel.

Its subcellular location is the mitochondrion membrane. Its function is as follows. Mitochondrial membrane ATP synthase (F(1)F(0) ATP synthase or Complex V) produces ATP from ADP in the presence of a proton gradient across the membrane which is generated by electron transport complexes of the respiratory chain. F-type ATPases consist of two structural domains, F(1) - containing the extramembraneous catalytic core and F(0) - containing the membrane proton channel, linked together by a central stalk and a peripheral stalk. During catalysis, ATP synthesis in the catalytic domain of F(1) is coupled via a rotary mechanism of the central stalk subunits to proton translocation. Part of the complex F(0) domain. Minor subunit located with subunit a in the membrane. This is ATP synthase protein 8 (mt:ATPase8) from Bombyx mori (Silk moth).